Here is a 557-residue protein sequence, read N- to C-terminus: Urocanate hydratase (557 aa).

The interval methionine 1 to asparagine 20 is disordered. NAD(+) is bound by residues glycine 52–glycine 53, glutamine 130, glycine 176–glycine 178, glutamate 196, arginine 201, asparagine 242–alanine 243, glutamine 263–histidine 267, tyrosine 273–leucine 274, and tyrosine 322. The active site involves cysteine 410. Position 492 (glycine 492) interacts with NAD(+).

Belongs to the urocanase family. It depends on NAD(+) as a cofactor.

Its subcellular location is the cytoplasm. It carries out the reaction 4-imidazolone-5-propanoate = trans-urocanate + H2O. It participates in amino-acid degradation; L-histidine degradation into L-glutamate; N-formimidoyl-L-glutamate from L-histidine: step 2/3. Its function is as follows. Catalyzes the conversion of urocanate to 4-imidazolone-5-propionate. The polypeptide is Urocanate hydratase (Brucella anthropi (strain ATCC 49188 / DSM 6882 / CCUG 24695 / JCM 21032 / LMG 3331 / NBRC 15819 / NCTC 12168 / Alc 37) (Ochrobactrum anthropi)).